Reading from the N-terminus, the 114-residue chain is Putative pterin-4-alpha-carbinolamine dehydratase (114 aa).

It belongs to the pterin-4-alpha-carbinolamine dehydratase family.

The catalysed reaction is (4aS,6R)-4a-hydroxy-L-erythro-5,6,7,8-tetrahydrobiopterin = (6R)-L-erythro-6,7-dihydrobiopterin + H2O. In Pseudoalteromonas translucida (strain TAC 125), this protein is Putative pterin-4-alpha-carbinolamine dehydratase.